The sequence spans 415 residues: Phosphoribosylamine--glycine ligase (415 aa).

Residues 108–311 (KKIMKKYNIP…LMQHIIDLDE (204 aa)) form the ATP-grasp domain. Residue 134 to 191 (IENCELPVVVKKDGLAAGKGVIIADTIEAARSAIEIMYGDEEEGTVVFETFLEGEEFS) coordinates ATP. The Mg(2+) site is built by Glu-281 and Asn-283.

The protein belongs to the GARS family. The cofactor is Mg(2+). It depends on Mn(2+) as a cofactor.

It catalyses the reaction 5-phospho-beta-D-ribosylamine + glycine + ATP = N(1)-(5-phospho-beta-D-ribosyl)glycinamide + ADP + phosphate + H(+). The protein operates within purine metabolism; IMP biosynthesis via de novo pathway; N(1)-(5-phospho-D-ribosyl)glycinamide from 5-phospho-alpha-D-ribose 1-diphosphate: step 2/2. In Staphylococcus aureus (strain Mu50 / ATCC 700699), this protein is Phosphoribosylamine--glycine ligase.